The chain runs to 383 residues: Protein salvador homolog 1 (383 aa).

Phosphoserine is present on residues serine 94 and serine 136. WW domains follow at residues 199–232 and 234–267; these read LPLP…HPLE and EGLP…HPCA. Threonine 210 carries the post-translational modification Phosphothreonine. Residues 321 to 368 form the SARAH domain; that stretch reads ILKWELFQLADLDTYQGMLKLLFMKELEQIVKMYEAYRQALLTELENR. A coiled-coil region spans residues 344 to 373; the sequence is MKELEQIVKMYEAYRQALLTELENRKQRQQ.

As to quaternary structure, homodimer. Stabilized through interaction with STK3/MST2 or STK4/MST1. Interacts (via SARAH domain) with isoform 1 of NEK2. Interacts with ESR1 only in the presence of STK3/MST2. Interacts with WTIP and AJUBA. Phosphorylated by STK3/MST2 and STK4/MST1. Phosphorylation is not required for SAV1 stability and may increase the number of protein binding sites on the scaffold molecule. Ubiquitously expressed in adult tissues with highest expression in the pancreas, aorta and interventricular septum and lowest expression in skeletal muscle. Expression was higher in fetal than in the adult heart. Expressed in various cell lines.

The protein localises to the nucleus. It localises to the cytoplasm. Its function is as follows. Regulator of STK3/MST2 and STK4/MST1 in the Hippo signaling pathway which plays a pivotal role in organ size control and tumor suppression by restricting proliferation and promoting apoptosis. The core of this pathway is composed of a kinase cascade wherein STK3/MST2 and STK4/MST1, in complex with its regulatory protein SAV1, phosphorylates and activates LATS1/2 in complex with its regulatory protein MOB1, which in turn phosphorylates and inactivates YAP1 oncoprotein and WWTR1/TAZ. Phosphorylation of YAP1 by LATS1/2 inhibits its translocation into the nucleus to regulate cellular genes important for cell proliferation, cell death, and cell migration. SAV1 is required for STK3/MST2 and STK4/MST1 activation and promotes cell-cycle exit and terminal differentiation in developing epithelial tissues. Plays a role in centrosome disjunction by regulating the localization of NEK2 to centrosomes, and its ability to phosphorylate CROCC and CEP250. In conjunction with STK3/MST2, activates the transcriptional activity of ESR1 through the modulation of its phosphorylation. This Homo sapiens (Human) protein is Protein salvador homolog 1.